A 914-amino-acid chain; its full sequence is Scaffold attachment factor B1 (914 aa).

Over residues 1–24 the composition is skewed to low complexity; that stretch reads MAETLSGLGDSGAAGAAALSSASS. Residues 1–33 are disordered; it reads MAETLSGLGDSGAAGAAALSSASSETGTRRLSD. Ala-2 carries the N-acetylalanine modification. Ser-24 and Ser-55 each carry phosphoserine. The region spanning 31–65 is the SAP domain; the sequence is LSDLRVIDLRAELRKRNVDSSGNKSVLMERLKKAI. Residues 64 to 117 are disordered; the sequence is AIEDEGGNPDEIEITSEGNKKTSKRSSKGRKPEEEGVEDNGLEENSGDGQEDVE. Positions 67-77 are enriched in acidic residues; sequence DEGGNPDEIEI. Ser-79 bears the Phosphoserine mark. The segment covering 98 to 117 has biased composition (acidic residues); it reads EGVEDNGLEENSGDGQEDVE. Residues Lys-172 and Lys-186 each participate in a glycyl lysine isopeptide (Lys-Gly) (interchain with G-Cter in SUMO2) cross-link. Position 188 is a phosphothreonine (Thr-188). Residues Ser-195, Ser-197, and Ser-209 each carry the phosphoserine modification. Residues 221 to 407 form a disordered region; that stretch reads LGETCKSEPV…EKGRSSCGRN (187 aa). A compositionally biased stretch (basic and acidic residues) spans 225–234; it reads CKSEPVKEES. Lys-231 is covalently cross-linked (Glycyl lysine isopeptide (Lys-Gly) (interchain with G-Cter in SUMO)). Polar residues predominate over residues 275-286; sequence SESTAHAQSSKA. Residues 293-309 show a composition bias toward basic and acidic residues; it reads VKREPAEQPGDGERTDC. Residue Lys-294 forms a Glycyl lysine isopeptide (Lys-Gly) (interchain with G-Cter in SUMO) linkage. The segment covering 319–330 has biased composition (low complexity); sequence EQSSAASELAEA. A compositionally biased stretch (basic and acidic residues) spans 346-359; the sequence is EARDSKEDGRKFDF. The segment covering 371–383 has biased composition (polar residues); the sequence is ESSTSEGADQKMS. Lys-381 is covalently cross-linked (Glycyl lysine isopeptide (Lys-Gly) (interchain with G-Cter in SUMO2)). Phosphoserine occurs at positions 383 and 384. Positions 390-401 are enriched in basic and acidic residues; it reads DTKRLSKEEKGR. A Glycyl lysine isopeptide (Lys-Gly) (interchain with G-Cter in SUMO2) cross-link involves residue Lys-392. Residues 406–484 form the RRM domain; sequence RNFWVSGLSS…KMISVEKAKN (79 aa). Ser-415 is subject to Phosphoserine. 2 stretches are compositionally biased toward basic and acidic residues: residues 477 to 551 and 559 to 570; these read ISVE…ERSR and GTERTVVMDKSK. Disordered regions lie at residues 477 to 636, 670 to 706, and 748 to 914; these read ISVE…QAQW, RERM…QERR, and FDHR…TRRY. Residues Lys-483, Lys-514, Lys-543, and Lys-570 each participate in a glycyl lysine isopeptide (Lys-Gly) (interchain with G-Cter in SUMO2) cross-link. An interaction with POLR2A; SFRS1; SFRS9 and SFRS10 region spans residues 528–791; sequence GDDGSGEKSK…RHGGPERHGR (264 aa). Lys-578 is covalently cross-linked (Glycyl lysine isopeptide (Lys-Gly) (interchain with G-Cter in SUMO1); alternate). Lys-578 participates in a covalent cross-link: Glycyl lysine isopeptide (Lys-Gly) (interchain with G-Cter in SUMO2); alternate. Phosphoserine is present on residues Ser-580, Ser-582, Ser-601, and Ser-604. Positions 581–636 are enriched in basic and acidic residues; it reads GSKERASKSLDRKSASREKRSVVSFDKVKEPRKSRDSESHRVRERSEREQRMQAQW. Positions 599–616 match the Nuclear localization signal motif; the sequence is KRSVVSFDKVKEPRKSRD. Positions 599–914 are interaction with SAFB2; the sequence is KRSVVSFDKV…PSDARFTRRY (316 aa). N6-acetyllysine is present on Lys-607. Over residues 748–795 the composition is skewed to basic and acidic residues; that stretch reads FDHRDRGRYPDHSVDRREGSRSMMGEREGQHYPERHGGPERHGRDSRD. Arg-810 bears the Omega-N-methylarginine mark. 2 stretches are compositionally biased toward basic and acidic residues: residues 816–831 and 840–850; these read PRRD…DDRA and MMDRDHKRWQG. Lys-846 participates in a covalent cross-link: Glycyl lysine isopeptide (Lys-Gly) (interchain with G-Cter in SUMO2). Arg-867, Arg-873, and Arg-883 each carry asymmetric dimethylarginine. The segment covering 891–900 has biased composition (gly residues); sequence GMQGGFGGQS. The segment covering 904 to 914 has biased composition (basic and acidic residues); sequence RPSDARFTRRY.

In terms of assembly, monomer and homodimer. Interacts with KHDRBS3. Interacts with CLK2. Interacts with POLR2A, ASF/SRSF1, SRp30c/SRFS9 and TRA2B/SFRS10. Interacts with SRPK1 and inhibits its activity. Interacts with RBMX. Interacts with FUS. Interacts with ZBED4. Sumoylated by PIAS1 with SUMO1 and SUMO2/3, desumoylated by SENP1. Sumoylation is required for transcriptional repressor activity.

Its subcellular location is the nucleus. Binds to scaffold/matrix attachment region (S/MAR) DNA and forms a molecular assembly point to allow the formation of a 'transcriptosomal' complex (consisting of SR proteins and RNA polymerase II) coupling transcription and RNA processing. Functions as an estrogen receptor corepressor and can also bind to the HSP27 promoter and decrease its transcription. Thereby acts as a negative regulator of cell proliferation. When associated with RBMX, binds to and stimulates transcription from the SREBF1 promoter. The protein is Scaffold attachment factor B1 (SAFB) of Pongo abelii (Sumatran orangutan).